The following is a 67-amino-acid chain: Protein AaeX (67 aa).

2 helical membrane-spanning segments follow: residues 3 to 23 and 43 to 63; these read VLPV…EIIV and LVWH…YVVS.

Belongs to the AaeX family.

The protein resides in the cell membrane. This Erwinia tasmaniensis (strain DSM 17950 / CFBP 7177 / CIP 109463 / NCPPB 4357 / Et1/99) protein is Protein AaeX.